The chain runs to 443 residues: METLASLYNDHLAELQKRAREVLTRNKLDALLIHSGELQRIFQDDRSYPFKVNAHFKAWVPVTSVPNCWLWVDGVNKPKLWFYSPVDYWHSVEPLPESFWTRSVELMPLANADDIAQQLPAQRERVGYIGYAQQRARDLGILAENVNPKAVLNYLDFHRSIKTGYELACMREAQKTAVMGHRAAHEAFLSGMSEFDINQAYLTATGHRDTDVPYDNIVALNEHASVLHYTTLDHQPPSEMLSFLLDAGAEYNGYAADLTRTYAGQSGSDFAQLIKDLNGEQLALMDTIKAGVRYTDYHVQMHQRVAKLLKSHKLVTGISEEAMVEQGLTTPFLPHGLGHPLGLQVHDSAGFMQDEQGTHLAAPSKYPYLRCTRMLQPGMVLTIEPGMYFIDSLLAPWRSGEFSQHFAWDRIDALKPYGGIRIEDNIVIHEKRIENMTRDLNLA.

Positions 246, 257, 339, 384, and 423 each coordinate Mn(2+).

The protein belongs to the peptidase M24B family. Bacterial-type prolidase subfamily. Mn(2+) is required as a cofactor.

The catalysed reaction is Xaa-L-Pro dipeptide + H2O = an L-alpha-amino acid + L-proline. In terms of biological role, splits dipeptides with a prolyl residue in the C-terminal position. The polypeptide is Xaa-Pro dipeptidase (Serratia proteamaculans (strain 568)).